The chain runs to 1285 residues: Peroxisomal ATPase PEX1 (1285 aa).

A compositionally biased stretch (polar residues) spans 344-353 (QQGKTKQSVM). The segment at 344-373 (QQGKTKQSVMSPEKEKHPLESPNHKQIGSD) is disordered. S354 carries the phosphoserine modification. Basic and acidic residues predominate over residues 355–373 (PEKEKHPLESPNHKQIGSD). ATP is bound by residues 601–608 (GGKGSGKS) and 883–890 (GPPGTGKT). Residues 1142–1161 (NGTSSDLSSQCPSAPSSVTQ) show a composition bias toward polar residues. A disordered region spans residues 1142 to 1162 (NGTSSDLSSQCPSAPSSVTQD). Residues S1183, S1211, and S1213 each carry the phosphoserine modification. The segment at 1262–1285 (FQNPKKRKNPSGTVFRPGQKVTLA) is disordered.

It belongs to the AAA ATPase family. As to quaternary structure, homooligomer; homooligomerizes in the cytosol, interaction with PEX6 promotes dissociation of the homooligomer. Interacts with PEX6; forming the PEX1-PEX6 AAA ATPase complex, which is composed of a heterohexamer formed by a trimer of PEX1-PEX6 dimers. Interacts indirectly with PEX26, via its interaction with PEX6.

The protein localises to the cytoplasm. It localises to the cytosol. The protein resides in the peroxisome membrane. The catalysed reaction is ATP + H2O = ADP + phosphate + H(+). In terms of biological role, component of the PEX1-PEX6 AAA ATPase complex, a protein dislocase complex that mediates the ATP-dependent extraction of the PEX5 receptor from peroxisomal membranes, an essential step for PEX5 recycling. Specifically recognizes PEX5 monoubiquitinated at 'Cys-11', and pulls it out of the peroxisome lumen through the PEX2-PEX10-PEX12 retrotranslocation channel. Extraction by the PEX1-PEX6 AAA ATPase complex is accompanied by unfolding of the TPR repeats and release of bound cargo from PEX5. This Cricetulus griseus (Chinese hamster) protein is Peroxisomal ATPase PEX1.